A 368-amino-acid polypeptide reads, in one-letter code: 1-aminocyclopropane-1-carboxylate oxidase (368 aa).

The region spanning 177–307 (PFILMGLLHY…RFSIPFFLDP (131 aa)) is the Fe2OG dioxygenase domain. The segment at 191–226 (HQEQEEEQEDDESNNGGKKSPNPDESKKPEVEKFGT) is disordered. A compositionally biased stretch (acidic residues) spans 194-203 (QEEEQEDDES). The segment covering 211–223 (PNPDESKKPEVEK) has biased composition (basic and acidic residues). Positions 229, 231, and 287 each coordinate Fe cation. Arg298 contacts 2-oxoglutarate.

Belongs to the iron/ascorbate-dependent oxidoreductase family. Fe(2+) is required as a cofactor.

The enzyme catalyses 1-aminocyclopropane-1-carboxylate + L-ascorbate + O2 = ethene + L-dehydroascorbate + hydrogen cyanide + CO2 + 2 H2O. Its pathway is alkene biosynthesis; ethylene biosynthesis via S-adenosyl-L-methionine; ethylene from S-adenosyl-L-methionine: step 2/2. Its function is as follows. Involved in ethylene biosynthesis. Overexpression induces overproduction of ethylene. This Dictyostelium discoideum (Social amoeba) protein is 1-aminocyclopropane-1-carboxylate oxidase (aco).